Here is a 329-residue protein sequence, read N- to C-terminus: Transcription factor RAX1 (329 aa).

HTH myb-type domains follow at residues 9-62 (KTKV…LNYL) and 63-117 (RPNI…RKKL). DNA-binding regions (H-T-H motif) lie at residues 38–62 (WISF…LNYL) and 90–113 (WSII…NTKL). Composition is skewed to low complexity over residues 122–131 (SDSSSSAMAS) and 144–154 (PTSPTTIPSSS). The segment at 122–162 (SDSSSSAMASPYLNPISQDVKRPTSPTTIPSSSYNPYAENP) is disordered.

As to expression, mostly expressed in roots. Also present in shoot tips and flower buds.

It localises to the nucleus. In terms of biological role, transcription activator of genes involved in the regulation of meristematic competence, such as CUC2. Positively regulates axillary meristems (AMs) formation and development, especially at early phases of vegetative growth, probably by specifying a stem cell niche for AM formation. Modulates the negative regulation mediated by gibberellic acid on the timing of developmental phase transitions. This chain is Transcription factor RAX1 (RAX1), found in Arabidopsis thaliana (Mouse-ear cress).